A 517-amino-acid chain; its full sequence is Ribosome assembly protein 4 (517 aa).

The segment at 1-25 (MATLAPPPSKRQRREEIQRTQTQQD) is disordered. Residues 34 to 128 (LGSFKANFID…TITLSAEPQA (95 aa)) form a ubiquitin-like (UBL) domain region. 8 WD repeats span residues 144 to 184 (GHGQ…PKFT), 187 to 226 (GHTGWVLGVSWSPDGKYLATCSMDTTVRVWDPESGKQVNQ), 230 to 277 (GHAK…HVLS), 278 to 316 (GHKGSVSCVKWGGTDLIYTGSHDRSVRVWDAVKGTLVHN), 351 to 397 (EERR…SKPV), 402 to 441 (GHQNKVNHVQFSPDGTLIASAGWDNSTKLWNARDGKFIKN), 444 to 483 (GHVAPVYQCAWSADSRLVVTGSKDCTLKVWNVRTGKLAMD), and 486 to 517 (GHEDEVYAVDWAADGELVASGGKDKAVRTWRN).

It belongs to the NLE1/RSA4 family. Associates with the pre-60S ribosomal particle. Interacts (via WD repeats) with uL18. Interacts (via UBL domain) with MDN1 (via VWFA/MIDAS domain). Interacts (via WD repeats) with NSA2.

It localises to the nucleus. It is found in the nucleolus. Its function is as follows. Involved in ribosome biogenesis. Required for processing and efficient intra-nuclear transport of pre-60S ribosomal subunits. Interacts with the AAA-ATPase Midasin, which is essential for the ATP-dependent dissociation of a group of nonribosomal factors from the pre-60S particle. In Chaetomium thermophilum (strain DSM 1495 / CBS 144.50 / IMI 039719) (Thermochaetoides thermophila), this protein is Ribosome assembly protein 4.